We begin with the raw amino-acid sequence, 696 residues long: Junctophilin-2 (696 aa).

Over 1-674 (MSGGRFDFDD…EVEVEEVPNT (674 aa)) the chain is Cytoplasmic. 6 MORN repeats span residues 14–36 (YCGGWEGGKAHGHGLCTGPKGQG), 38–59 (YSGSWNFGFEVAGVYTWPSGNT), 60–79 (FEGYWSQGKRHGLGIETKGR), 82–104 (YKGEWTHGFKGRYGIRQSTNSGA), 106–128 (YEGTWNNGLQDGYGTETYADGGT), and 129–151 (YQGQFTNGMRHGYGVRQSVPYGM). Phosphoserine is present on residues serine 162 and serine 165. Disordered regions lie at residues 164–192 (SSLRSEHSNGTVAPDSPAADGPMLPSPPV) and 246–273 (LSSGASDAASTGSLAEGAEGPDDAAAPF). MORN repeat units lie at residues 285–307 (YMGEWKNDKRSGFGVSERSSGLR) and 308–330 (YEGEWLDNLRHGYGRTTLPDGHR). The Bipartite nuclear localization signal signature appears at 345 to 359 (KRRVLPLKSSKVRQK). The interval 439–664 (NSESLLEPPE…RKEVAQAKEA (226 aa)) is disordered. 3 positions are modified to phosphoserine: serine 440, serine 442, and serine 462. The segment covering 457 to 471 (ERPRESPQLHERETP) has biased composition (basic and acidic residues). Threonine 470 carries the phosphothreonine modification. The segment covering 474–487 (EGGPPSPAGTPPQP) has biased composition (pro residues). Serine 479 carries the phosphoserine modification. Threonine 483 carries the post-translational modification Phosphothreonine. A Nuclear localization signal motif is present at residues 488–492 (KRPRP). Residues serine 527 and serine 533 each carry the phosphoserine modification. Residues 573–585 (PLEDEQEPEPEPE) are compositionally biased toward acidic residues. 3 positions are modified to phosphoserine: serine 593, serine 597, and serine 613. Residues 631 to 644 (AEPKAKARKTEARG) show a composition bias toward basic and acidic residues. The helical; Anchor for type IV membrane protein transmembrane segment at 675-695 (VLICMVILLNIGLAILFVHLL) threads the bilayer.

This sequence belongs to the junctophilin family. Interacts with TRPC3. Interacts with BAG5 and HSPA8; the interaction with HSPA8 is increased in the presence of BAG5. In terms of assembly, interacts with MEF2C. Post-translationally, proteolytically cleaved by calpain in response to cardiac stress. The major cleavage site takes place at the C-terminus and leads to the release of the Junctophilin-2 N-terminal fragment chain (JP2NT). Phosphorylation on Ser-165, probably by PKC, affects RYR1-mediated calcium ion release, interaction with TRPC3, and skeletal muscle myotubule development. As to expression, abundantly expressed in skeletal muscle and heart. Weak expression in stomach and lung.

It localises to the cell membrane. It is found in the sarcoplasmic reticulum membrane. Its subcellular location is the endoplasmic reticulum membrane. The protein resides in the nucleus. Functionally, membrane-binding protein that provides a structural bridge between the plasma membrane and the sarcoplasmic reticulum and is required for normal excitation-contraction coupling in cardiomyocytes. Provides a structural foundation for functional cross-talk between the cell surface and intracellular Ca(2+) release channels by maintaining the 12-15 nm gap between the sarcolemma and the sarcoplasmic reticulum membranes in the cardiac dyads. Necessary for proper intracellular Ca(2+) signaling in cardiac myocytes via its involvement in ryanodine receptor-mediated calcium ion release. Contributes to the construction of skeletal muscle triad junctions. Transcription repressor required to safeguard against the deleterious effects of cardiac stress. Generated following cleavage of the Junctophilin-2 chain by calpain in response to cardiac stress in cardiomyocytes. Following cleavage and release from the membrane, translocates to the nucleus, binds DNA and represses expression of genes implicated in cell growth and differentiation, hypertrophy, inflammation and fibrosis. Modifies the transcription profile and thereby attenuates pathological remodeling in response to cardiac stress. Probably acts by competing with MEF2 transcription factors and TATA-binding proteins. In Mus musculus (Mouse), this protein is Junctophilin-2.